A 201-amino-acid chain; its full sequence is Large ribosomal subunit protein uL4 (201 aa).

A disordered region spans residues 39–67 (ARQGSRAQKTRSEVAGGGRKPWKQKGSGR).

Belongs to the universal ribosomal protein uL4 family. In terms of assembly, part of the 50S ribosomal subunit.

One of the primary rRNA binding proteins, this protein initially binds near the 5'-end of the 23S rRNA. It is important during the early stages of 50S assembly. It makes multiple contacts with different domains of the 23S rRNA in the assembled 50S subunit and ribosome. Functionally, forms part of the polypeptide exit tunnel. The chain is Large ribosomal subunit protein uL4 from Marinomonas sp. (strain MWYL1).